The primary structure comprises 142 residues: Hemoglobin subunit alpha (142 aa).

A Globin domain is found at 2-142; sequence VLSAADKGNV…VSTVLTSKYR (141 aa). Position 4 is a phosphoserine (Ser4). An N6-succinyllysine mark is found at Lys8 and Lys12. Position 17 is an N6-acetyllysine; alternate (Lys17). Lys17 is modified (N6-succinyllysine; alternate). At Tyr25 the chain carries Phosphotyrosine. The residue at position 36 (Ser36) is a Phosphoserine. Lys41 is modified (N6-succinyllysine). Ser50 carries the post-translational modification Phosphoserine. Residue His59 coordinates O2. His88 contacts heme b. At Ser103 the chain carries Phosphoserine. A Phosphothreonine modification is found at Thr109. At Ser125 the chain carries Phosphoserine. Thr135 and Thr138 each carry phosphothreonine. A Phosphoserine modification is found at Ser139.

The protein belongs to the globin family. In terms of assembly, heterotetramer of two alpha chains and two beta chains. Red blood cells.

Its function is as follows. Involved in oxygen transport from the lung to the various peripheral tissues. Hemopressin acts as an antagonist peptide of the cannabinoid receptor CNR1. Hemopressin-binding efficiently blocks cannabinoid receptor CNR1 and subsequent signaling. The protein is Hemoglobin subunit alpha (HBA) of Bos gaurus frontalis (Domestic gayal).